The primary structure comprises 25 residues: Alpha-amylase inhibitor (25 aa).

As to quaternary structure, monomer or homodimer. May exist both in a glycosylated and in an unglycosylated form.

It localises to the secreted. Functionally, inhibits alpha-amylases but not trypsin. Is more effective against insect alpha-amylases than those of mammals. In Secale cereale (Rye), this protein is Alpha-amylase inhibitor.